The following is a 421-amino-acid chain: Serine hydroxymethyltransferase (421 aa).

(6S)-5,6,7,8-tetrahydrofolate contacts are provided by residues Leu121 and 125–127 (GHL). The residue at position 229 (Lys229) is an N6-(pyridoxal phosphate)lysine.

Belongs to the SHMT family. Homodimer. Pyridoxal 5'-phosphate is required as a cofactor.

It is found in the cytoplasm. The catalysed reaction is (6R)-5,10-methylene-5,6,7,8-tetrahydrofolate + glycine + H2O = (6S)-5,6,7,8-tetrahydrofolate + L-serine. Its pathway is one-carbon metabolism; tetrahydrofolate interconversion. It functions in the pathway amino-acid biosynthesis; glycine biosynthesis; glycine from L-serine: step 1/1. In terms of biological role, catalyzes the reversible interconversion of serine and glycine with tetrahydrofolate (THF) serving as the one-carbon carrier. This reaction serves as the major source of one-carbon groups required for the biosynthesis of purines, thymidylate, methionine, and other important biomolecules. Also exhibits THF-independent aldolase activity toward beta-hydroxyamino acids, producing glycine and aldehydes, via a retro-aldol mechanism. This Actinobacillus pleuropneumoniae serotype 5b (strain L20) protein is Serine hydroxymethyltransferase.